An 842-amino-acid chain; its full sequence is Alanine--tRNA ligase (842 aa).

Histidine 549, histidine 553, cysteine 650, and histidine 654 together coordinate Zn(2+).

This sequence belongs to the class-II aminoacyl-tRNA synthetase family. It depends on Zn(2+) as a cofactor.

The protein localises to the cytoplasm. It carries out the reaction tRNA(Ala) + L-alanine + ATP = L-alanyl-tRNA(Ala) + AMP + diphosphate. Catalyzes the attachment of alanine to tRNA(Ala) in a two-step reaction: alanine is first activated by ATP to form Ala-AMP and then transferred to the acceptor end of tRNA(Ala). Also edits incorrectly charged Ser-tRNA(Ala) and Gly-tRNA(Ala) via its editing domain. This is Alanine--tRNA ligase from Campylobacter jejuni subsp. jejuni serotype O:2 (strain ATCC 700819 / NCTC 11168).